The primary structure comprises 334 residues: Inositol 2-dehydrogenase (334 aa).

Belongs to the Gfo/Idh/MocA family. Homotetramer.

The catalysed reaction is myo-inositol + NAD(+) = scyllo-inosose + NADH + H(+). In terms of biological role, involved in the oxidation of myo-inositol (MI) to 2-keto-myo-inositol (2KMI or 2-inosose). This is Inositol 2-dehydrogenase from Cereibacter sphaeroides (strain ATCC 17023 / DSM 158 / JCM 6121 / CCUG 31486 / LMG 2827 / NBRC 12203 / NCIMB 8253 / ATH 2.4.1.) (Rhodobacter sphaeroides).